We begin with the raw amino-acid sequence, 491 residues long: Glutamate--tRNA ligase (491 aa).

The 'HIGH' region signature appears at 9-19; that stretch reads PSPTGTPHVGL. The 'KMSKS' region signature appears at 253–257; the sequence is KLSKR. Lysine 256 serves as a coordination point for ATP.

The protein belongs to the class-I aminoacyl-tRNA synthetase family. Glutamate--tRNA ligase type 1 subfamily. In terms of assembly, monomer.

Its subcellular location is the cytoplasm. It catalyses the reaction tRNA(Glu) + L-glutamate + ATP = L-glutamyl-tRNA(Glu) + AMP + diphosphate. Catalyzes the attachment of glutamate to tRNA(Glu) in a two-step reaction: glutamate is first activated by ATP to form Glu-AMP and then transferred to the acceptor end of tRNA(Glu). This Mycolicibacterium gilvum (strain PYR-GCK) (Mycobacterium gilvum (strain PYR-GCK)) protein is Glutamate--tRNA ligase.